A 707-amino-acid chain; its full sequence is Acyl-CoA ligase 891, peroxisomal (707 aa).

An ATP-binding site is contributed by 259-270 (INYTSGTTGPPK). Residues 525-549 (DGWFRTGDVCTIDEKGRFIIIDRRK) form a fatty acid-binding region. The Peroxisome targeting signal motif lies at 705 to 707 (AKL).

The protein belongs to the ATP-dependent AMP-binding enzyme family.

The protein localises to the peroxisome matrix. It catalyses the reaction (4E,8E)-10-(4-hydroxy-6-methoxy-7-methyl-3-oxo-1,3-dihydro-2-benzofuran-5-yl)-4,8-dimethyldeca-4,8-dienoate + ATP + CoA = (4E,8E)-10-(4-hydroxy-6-methoxy-7-methyl-3-oxo-1,3-dihydro-2-benzofuran-5-yl)-4,8-dimethyldeca-4,8-dienoyl-CoA + AMP + diphosphate. The protein operates within secondary metabolite biosynthesis; terpenoid biosynthesis. Acyl-CoA ligase involved in the biosynthesis of mycophenolic acid (MPA), the first isolated antibiotic natural product in the world obtained from a culture of Penicillium brevicompactum in 1893. The peroxisomal acyl-CoA ligase 891 converts the intermediate MFDHMP-3C into MFDHMP-3C-CoA which impairs its diffusion from the peroxisome. The first step of the pathway is the synthesis of 5-methylorsellinic acid (5MOA) by the cytosolic polyketide synthase mpaC. 5MOA is then converted to the phthalide compound 5,7-dihydroxy-4,6-dimethylphthalide (DHMP) by the endoplasmic reticulum-bound cytochrome P450 monooxygenase mpaDE. MpaDE first catalyzes hydroxylation of 5-MOA to 4,6-dihydroxy-2-(hydroxymethyl)-3-methylbenzoic acid (DHMB). MpaDE then acts as a lactone synthase that catalyzes the ring closure to convert DHMB into DHMP. The next step is the prenylation of DHMP by the Golgi apparatus-associated prenyltransferase mpaA to yield farnesyl-DHMP (FDHMP). The ER-bound oxygenase mpaB then mediates the oxidative cleavage the C19-C20 double bond in FDHMP to yield FDHMP-3C via a mycophenolic aldehyde intermediate. The O-methyltransferase mpaG catalyzes the methylation of FDHMP-3C to yield MFDHMP-3C. After the cytosolic methylation of FDHMP-3C, MFDHMP-3C enters into peroxisomes probably via free diffusion due to its low molecular weight. Upon a peroxisomal CoA ligation reaction, catalyzed by a beta-oxidation component enzyme acyl-CoA ligase ACL891, MFDHMP-3C-CoA would then be restricted to peroxisomes for the following beta-oxidation pathway steps. The peroxisomal beta-oxidation machinery than converts MFDHMP-3C-CoA into MPA_CoA, via a beta-oxidation chain-shortening process. Finally mpaH acts as a peroxisomal acyl-CoA hydrolase with high substrate specificity toward MPA-CoA to release the final product MPA. This chain is Acyl-CoA ligase 891, peroxisomal, found in Penicillium roqueforti (strain FM164).